Here is a 381-residue protein sequence, read N- to C-terminus: Acetylornithine deacetylase (381 aa).

Zn(2+) is bound at residue His79. The active site involves Asp81. Asp111 serves as a coordination point for Zn(2+). The active site involves Glu143. 3 residues coordinate Zn(2+): Glu144, Glu168, and His354.

This sequence belongs to the peptidase M20A family. ArgE subfamily. In terms of assembly, homodimer. The cofactor is Zn(2+). It depends on Co(2+) as a cofactor. Requires glutathione as cofactor.

The protein resides in the cytoplasm. It carries out the reaction N(2)-acetyl-L-ornithine + H2O = L-ornithine + acetate. It participates in amino-acid biosynthesis; L-arginine biosynthesis; L-ornithine from N(2)-acetyl-L-ornithine (linear): step 1/1. Functionally, catalyzes the hydrolysis of the amide bond of N(2)-acetylated L-amino acids. Cleaves the acetyl group from N-acetyl-L-ornithine to form L-ornithine, an intermediate in L-arginine biosynthesis pathway, and a branchpoint in the synthesis of polyamines. In Buchnera aphidicola subsp. Acyrthosiphon pisum (strain 5A), this protein is Acetylornithine deacetylase.